A 136-amino-acid polypeptide reads, in one-letter code: Large ribosomal subunit protein bL12 (136 aa).

The protein belongs to the bacterial ribosomal protein bL12 family. As to quaternary structure, homodimer. Part of the ribosomal stalk of the 50S ribosomal subunit. Forms a multimeric L10(L12)X complex, where L10 forms an elongated spine to which 2 to 4 L12 dimers bind in a sequential fashion. Binds GTP-bound translation factors.

Its function is as follows. Forms part of the ribosomal stalk which helps the ribosome interact with GTP-bound translation factors. Is thus essential for accurate translation. The sequence is that of Large ribosomal subunit protein bL12 from Synechococcus sp. (strain JA-2-3B'a(2-13)) (Cyanobacteria bacterium Yellowstone B-Prime).